The chain runs to 296 residues: Putative ankyrin repeat protein FPV216 (296 aa).

ANK repeat units lie at residues Ser73–Thr102 and Leu107–Ile136.

In Fowlpox virus (strain NVSL) (FPV), this protein is Putative ankyrin repeat protein FPV216.